The sequence spans 936 residues: Lipoxygenase 2.1, chloroplastic (936 aa).

The disordered stretch occupies residues 1-69 (MLTATKPLVG…LSADSNGAAV (69 aa)). Over residues 47–59 (STSTSTTTTTTTT) the composition is skewed to low complexity. Residues 88-217 (MKATVTVHMS…CTPDKRVFFP (130 aa)) enclose the PLAT domain. Residues 220–936 (SYLPSQTPKG…EMGIPNSISI (717 aa)) form the Lipoxygenase domain. Residues 264–308 (LGNPDDDNNPTTRPVLGGKEHPYPRRCRTGRPRSKKDPFSEERSH) are disordered. Residues 287-297 (PRRCRTGRPRS) are compositionally biased toward basic residues. A compositionally biased stretch (basic and acidic residues) spans 298–308 (KKDPFSEERSH). Fe cation-binding residues include H587, H592, H777, N781, and I936.

This sequence belongs to the lipoxygenase family. Fe cation serves as cofactor. The N-terminus is blocked.

The protein resides in the plastid. Its subcellular location is the chloroplast. The catalysed reaction is (9Z,12Z)-octadecadienoate + O2 = (13S)-hydroperoxy-(9Z,11E)-octadecadienoate. It carries out the reaction (9Z,12Z,15Z)-octadecatrienoate + O2 = (13S)-hydroperoxy-(9Z,11E,15Z)-octadecatrienoate. It participates in lipid metabolism; oxylipin biosynthesis. Its function is as follows. Plant lipoxygenase may be involved in a number of diverse aspects of plant physiology including growth and development, pest resistance, and senescence or responses to wounding. This enzyme is possibly involved in jasmonic acid synthesis. It exhibits linoleate 13-lipoxygenase and arachidonate 15-lipoxygenase activity. The polypeptide is Lipoxygenase 2.1, chloroplastic (LOX2.1) (Hordeum vulgare (Barley)).